A 138-amino-acid polypeptide reads, in one-letter code: Small ribosomal subunit protein uS11c (138 aa).

The tract at residues 1–22 is disordered; it reads MAKSIPRISSRRNGRIGSGNNV.

This sequence belongs to the universal ribosomal protein uS11 family. In terms of assembly, part of the 30S ribosomal subunit.

It is found in the plastid. This is Small ribosomal subunit protein uS11c from Cuscuta reflexa (Southern Asian dodder).